The primary structure comprises 240 residues: Coatomer subunit delta (240 aa).

Positions 215–226 (AAAKASSAPKAK) are enriched in low complexity. The segment at 215–240 (AAAKASSAPKAKGMQLGKKKNTSLLY) is disordered. Over residues 231–240 (GKKKNTSLLY) the composition is skewed to basic residues.

It belongs to the adaptor complexes medium subunit family. Delta-COP subfamily. In terms of assembly, oligomeric complex that consists of at least the alpha, beta, beta', gamma, delta, epsilon and zeta subunits.

The protein resides in the cytoplasm. Its subcellular location is the nucleus. Functionally, the coatomer is a cytosolic protein complex that binds to dilysine motifs and reversibly associates with Golgi non-clathrin-coated vesicles, which further mediate biosynthetic protein transport from the ER, via the Golgi up to the trans Golgi network. Coatomer complex is required for budding from Golgi membranes, and is essential for the retrograde Golgi-to-ER transport of dilysine-tagged proteins. This chain is Coatomer subunit delta (ret2), found in Schizosaccharomyces pombe (strain 972 / ATCC 24843) (Fission yeast).